The chain runs to 204 residues: Recombination protein RecR (204 aa).

Residues 57–72 (CPTCFNYTDTDICRYC) form a C4-type zinc finger. The Toprim domain occupies 80–181 (ESICVVEEPS…KLSRIAHGVP (102 aa)).

Belongs to the RecR family.

In terms of biological role, may play a role in DNA repair. It seems to be involved in an RecBC-independent recombinational process of DNA repair. It may act with RecF and RecO. The chain is Recombination protein RecR from Bdellovibrio bacteriovorus (strain ATCC 15356 / DSM 50701 / NCIMB 9529 / HD100).